The primary structure comprises 213 residues: Large ribosomal subunit protein uL3 (213 aa).

The tract at residues 122-147 is disordered; it reads AIKRHGQSRGPMAHGSRYHRRPGSMG.

Belongs to the universal ribosomal protein uL3 family. As to quaternary structure, part of the 50S ribosomal subunit. Forms a cluster with proteins L14 and L19.

Its function is as follows. One of the primary rRNA binding proteins, it binds directly near the 3'-end of the 23S rRNA, where it nucleates assembly of the 50S subunit. The polypeptide is Large ribosomal subunit protein uL3 (Geobacillus stearothermophilus (Bacillus stearothermophilus)).